We begin with the raw amino-acid sequence, 1321 residues long: Adhesion G protein-coupled receptor A3 (1321 aa).

The N-terminal stretch at 1–33 (MEPPGRRRGRAQPPLLLPLSLLALLALLGGGGG) is a signal peptide. Topologically, residues 34–761 (GGAAALPAGC…YTQAASLLHP (728 aa)) are extracellular. 2 N-linked (GlcNAc...) asparagine glycosylation sites follow: Asn-81 and Asn-98. 4 LRR repeats span residues 82–103 (RTVTLILSNNKISELKNGSFSG), 106–127 (LLERLDLRNNLISSIDPGAFWG), 130–151 (SLKRLDLTNNRIGCLNADIFRG), and 154–175 (NLVRLNLSGNLFSSLSQGTFDY). Residues Asn-159, Asn-206, Asn-301, Asn-332, Asn-433, Asn-453, and Asn-592 are each glycosylated (N-linked (GlcNAc...) asparagine). The 51-residue stretch at 187-237 (EYLLCDCNILWMHRWVKEKNITVRDTRCVYPKSLQAQPVTGVKQELLTCDP) folds into the LRRCT domain. An Ig-like domain is found at 242–340 (PSFYMTPSHR…GNNTRTVDIV (99 aa)). Cys-264 and Cys-324 are oxidised to a cystine. The GAIN-B domain maps to 583 to 750 (LDKQLSFKCN…AVLMDLTGSE (168 aa)). One copy of the LRR 5 repeat lies at 594-620 (SNTFSSLALKNTIVEASIQLPPSLFSP). N-linked (GlcNAc...) asparagine glycans are attached at residues Asn-652, Asn-687, and Asn-728. The tract at residues 701 to 750 (AARWDFDLLNGQGGWKSDGCHILYSDENITTIQCYSLSNYAVLMDLTGSE) is GPS. Cys-720 and Cys-734 are joined by a disulfide. A helical membrane pass occupies residues 762 to 782 (VVYTTAIILLLCLLAVIVSYI). Residues 783–796 (YHHSLIRISLKSWH) are Cytoplasmic-facing. The chain crosses the membrane as a helical span at residues 797–817 (MLVNLCFHIFLTCVVFVGGIT). Over 818-826 (QTRNASICQ) the chain is Extracellular. Asn-821 carries N-linked (GlcNAc...) asparagine glycosylation. The helical transmembrane segment at 827-847 (AVGIILHYSTLATVLWVGVTA) threads the bilayer. Residues 848–876 (RNIYKQVTKKAKRCQDPDEPPPPPRPMLR) are Cytoplasmic-facing. A helical membrane pass occupies residues 877 to 897 (FYLIGGGIPIIVCGITAAANI). Residues 898–919 (KNYGSRPNAPYCWMAWEPSLGA) are Extracellular-facing. A helical membrane pass occupies residues 920-940 (FYGPASFITFVNCMYFLSIFI). The Cytoplasmic segment spans residues 941–996 (QLKRHPERKYELKEPTEEQQRLAANENGEINHQDSMSLSLISTSALENEHTFHSQL). The helical transmembrane segment at 997–1017 (LGASLTLLLYVALWMFGALAV) threads the bilayer. The Extracellular portion of the chain corresponds to 1018 to 1024 (SLYYPLD). A helical membrane pass occupies residues 1025-1045 (LVFSFVFGATSLSFSAFFVVH). At 1046-1321 (HCVNREDVRL…TGLWKHETTV (276 aa)) the chain is on the cytoplasmic side. Residues 1073 to 1083 (NVQPPNSNGTN) show a composition bias toward polar residues. Disordered stretches follow at residues 1073–1094 (NVQPPNSNGTNGEAPKCPNSSA), 1198–1219 (VEGSVQNGLPKSRLGNNEGHSR), 1231–1265 (QYNPPQQDSSDACSTLPKSSRNFEKPVSTTSKKDA), and 1294–1321 (SNGQEGPLLGTDSTGNVRTGLWKHETTV). Positions 1233 to 1250 (NPPQQDSSDACSTLPKSS) are enriched in polar residues. Residues 1319-1321 (TTV) carry the PDZ-binding motif.

The protein belongs to the G-protein coupled receptor 2 family. Adhesion G-protein coupled receptor (ADGR) subfamily. In terms of assembly, interacts (via PDZ-binding motif) with DLG1.

It is found in the membrane. Orphan receptor that may have a role in planar cell polarity pathway. The polypeptide is Adhesion G protein-coupled receptor A3 (Homo sapiens (Human)).